The sequence spans 53 residues: Sec-independent protein translocase protein TatA (53 aa).

A helical membrane pass occupies residues 1–21 (MGMSFSHLLIVLLIIFVLFGA).

The protein belongs to the TatA/E family. In terms of assembly, the Tat system comprises two distinct complexes: a TatABC complex, containing multiple copies of TatA, TatB and TatC subunits, and a separate TatA complex, containing only TatA subunits. Substrates initially bind to the TatABC complex, which probably triggers association of the separate TatA complex to form the active translocon.

It localises to the cell inner membrane. Part of the twin-arginine translocation (Tat) system that transports large folded proteins containing a characteristic twin-arginine motif in their signal peptide across membranes. TatA could form the protein-conducting channel of the Tat system. The protein is Sec-independent protein translocase protein TatA of Rickettsia africae (strain ESF-5).